The chain runs to 536 residues: Protein ST7 homolog (536 aa).

2 consecutive transmembrane segments (helical) span residues 3 to 23 (CSWT…LFAL) and 49 to 69 (FYVA…IFEW). The stretch at 191 to 218 (LAEEESETVSQAENLLRRALRAIESTLN) forms a coiled coil. The helical transmembrane segment at 465 to 485 (TLMMLLQTFICLAICILAVLA) threads the bilayer.

This sequence belongs to the ST7 family.

It is found in the membrane. This chain is Protein ST7 homolog, found in Caenorhabditis elegans.